The following is a 241-amino-acid chain: uncharacterized protein (241 aa).

3 disordered regions span residues 19–59, 101–139, and 152–182; these read ERDR…QQLG, VRRPNPSVPSPLPKPPVPSAGSCEPLAPPPTSASGASRS, and RGCRPAPGSAAGWPRSDRRARLPRKASKPCS. A compositionally biased stretch (gly residues) spans 34-48; it reads ARGGRGLWTVGGGGS. The span at 49 to 58 shows a compositional bias: polar residues; it reads PTETAESQQL. Over residues 106–118 the composition is skewed to pro residues; sequence PSVPSPLPKPPVP.

This is an uncharacterized protein from Homo sapiens (Human).